The primary structure comprises 242 residues: Cysteine desulfuration protein SufE (242 aa).

Cys148 serves as the catalytic Cysteine persulfide intermediate.

It belongs to the SufE family. In terms of assembly, monomer. Interacts with SufS; interaction enhances cysteine desulfurase activity of SufS.

Its subcellular location is the plastid. The protein localises to the apicoplast. It functions in the pathway cofactor biosynthesis; iron-sulfur cluster biosynthesis. Participates in sulfur mobilization (SUF) pathway for iron-sulfur (Fe-S) cluster biogenesis. Enhances cysteine desulfurase activity of SufS. Probably functions as a sulfur acceptor for SufS. The sequence is that of Cysteine desulfuration protein SufE from Plasmodium vivax.